The following is a 358-amino-acid chain: Peptide chain release factor 1 (358 aa).

Glutamine 237 is modified (N5-methylglutamine). Basic and acidic residues predominate over residues 291 to 309 (EESGYRKLAGHGDRSEKIR). The disordered stretch occupies residues 291 to 313 (EESGYRKLAGHGDRSEKIRTYNY).

The protein belongs to the prokaryotic/mitochondrial release factor family. Methylated by PrmC. Methylation increases the termination efficiency of RF1.

The protein localises to the cytoplasm. Its function is as follows. Peptide chain release factor 1 directs the termination of translation in response to the peptide chain termination codons UAG and UAA. The chain is Peptide chain release factor 1 from Mycoplasmopsis agalactiae (strain NCTC 10123 / CIP 59.7 / PG2) (Mycoplasma agalactiae).